A 365-amino-acid polypeptide reads, in one-letter code: tRNA/tmRNA (uracil-C(5))-methyltransferase (365 aa).

Gln-189, Tyr-217, Asn-222, Glu-238, and Asp-298 together coordinate S-adenosyl-L-methionine. Catalysis depends on Cys-323, which acts as the Nucleophile. The active-site Proton acceptor is Glu-357.

Belongs to the class I-like SAM-binding methyltransferase superfamily. RNA M5U methyltransferase family. TrmA subfamily.

It carries out the reaction uridine(54) in tRNA + S-adenosyl-L-methionine = 5-methyluridine(54) in tRNA + S-adenosyl-L-homocysteine + H(+). It catalyses the reaction uridine(341) in tmRNA + S-adenosyl-L-methionine = 5-methyluridine(341) in tmRNA + S-adenosyl-L-homocysteine + H(+). Dual-specificity methyltransferase that catalyzes the formation of 5-methyluridine at position 54 (m5U54) in all tRNAs, and that of position 341 (m5U341) in tmRNA (transfer-mRNA). This is tRNA/tmRNA (uracil-C(5))-methyltransferase from Proteus mirabilis (strain HI4320).